A 158-amino-acid chain; its full sequence is NADH-quinone oxidoreductase subunit B (158 aa).

Residues Cys37, Cys38, Cys102, and Cys132 each coordinate [4Fe-4S] cluster.

This sequence belongs to the complex I 20 kDa subunit family. In terms of assembly, NDH-1 is composed of 14 different subunits. Subunits NuoB, C, D, E, F, and G constitute the peripheral sector of the complex. [4Fe-4S] cluster is required as a cofactor.

The protein localises to the cell inner membrane. It carries out the reaction a quinone + NADH + 5 H(+)(in) = a quinol + NAD(+) + 4 H(+)(out). In terms of biological role, NDH-1 shuttles electrons from NADH, via FMN and iron-sulfur (Fe-S) centers, to quinones in the respiratory chain. Couples the redox reaction to proton translocation (for every two electrons transferred, four hydrogen ions are translocated across the cytoplasmic membrane), and thus conserves the redox energy in a proton gradient. In Bordetella petrii (strain ATCC BAA-461 / DSM 12804 / CCUG 43448), this protein is NADH-quinone oxidoreductase subunit B.